The sequence spans 353 residues: Galectin-9 (353 aa).

A Galectin 1 domain is found at 17 to 147 (FTGPIQGGLQ…CLKLSFITFQ (131 aa)). Residues Asn47, His60, Arg64, Asn74, and 81–87 (WGPEERK) each bind a beta-D-galactoside. Residues 167 to 186 (QFPRTPKGRKQKTQNFRPAH) form a disordered region. Positions 225-353 (FYTPIPNGLY…GDIQLTHVQT (129 aa)) constitute a Galectin 2 domain. Residues His265, Arg269, Thr279, and 285–291 (WGQEERS) each bind a beta-D-galactoside.

In terms of assembly, homodimer. Accentuated expression in liver and thymus of embryo, detected in embryonic heart, brain, lung, liver, and kidney. Highly expressed in adult thymus, small intestine, and liver, and to a lesser extent in lung, kidney, spleen, cardiac, and skeletal muscle. Barely detectable in brain and reticulocyte. Expressed in placenta, uterus and decidua during pregnancy. Expressed in CD4+ T-cells with higher levels in iTreg cells than other T-cell types and sustained high levels throughout iTreg cell differentiation (at protein level). Expressed in myeloid cells in lung. Constitutively expressed in microglia. Isoform 1 is expressed exclusively in the small intestine. Isoform 2 expression in decidua increases in pathological pregnancy from gestation day 7.5 to 13.5 and it is higher than in normal pregnancy. Isoform 3 expression in decidua is higher in normal pregnancy than in pathological pregnancy.

It localises to the cytoplasm. It is found in the nucleus. The protein resides in the secreted. In terms of biological role, binds galactosides. Has high affinity for the Forssman pentasaccharide. Ligand for HAVCR2/TIM3. Binding to HAVCR2 induces T-helper type 1 lymphocyte (Th1) death. Also stimulates bactericidal activity in infected macrophages by causing macrophage activation and IL1B secretion which restricts intracellular bacterial growth. Ligand for P4HB; the interaction retains P4HB at the cell surface of Th2 T-helper cells, increasing disulfide reductase activity at the plasma membrane, altering the plasma membrane redox state and enhancing cell migration. Ligand for CD44; the interaction enhances binding of SMAD3 to the FOXP3 promoter, leading to up-regulation of FOXP3 expression and increased induced regulatory T (iTreg) cell stability and suppressive function. Promotes ability of mesenchymal stromal cells to suppress T-cell proliferation. Expands regulatory T-cells and induces cytotoxic T-cell apoptosis following virus infection. Activates ERK1/2 phosphorylation inducing cytokine (IL-6, IL-8, IL-12) and chemokine (CCL2) production in mast and dendritic cells. Inhibits degranulation and induces apoptosis of mast cells. Induces maturation and migration of dendritic cells. Inhibits natural killer (NK) cell function. Can transform NK cell phenotype from peripheral to decidual during pregnancy. Astrocyte derived galectin-9 enhances microglial TNF production. May play a role in thymocyte-epithelial interactions relevant to the biology of the thymus. May provide the molecular basis for urate flux across cell membranes, allowing urate that is formed during purine metabolism to efflux from cells and serving as an electrogenic transporter that plays an important role in renal and gastrointestinal urate excretion. Highly selective to the anion urate. Its function is as follows. Acts as an eosinophil chemoattractant. It also inhibits angiogenesis. Suppresses IFNG production by natural killer cells. The sequence is that of Galectin-9 (Lgals9) from Mus musculus (Mouse).